A 372-amino-acid chain; its full sequence is MKLLSLHVQDFRNLAAVALAPSPRATVLLGENGQGKTNLLEAIYFLTTLKPLRAVRLAELVRFGADQGAVAGDFEGPGGVRRVAVQVAAGGRTATLDGKALGSGARLDDYFEGLASVCFSPDDLLLVKAGPDGRRRFLDRAAFNRWPAVLGEAREYVRALRARNAALRAGPAEVEASFREPLVRAGARLLVRRRELVAELAPRLQAAFAEISGPEAPEAHLAYRAAGGVDVAHPEAEVAARLAHALEARLERDREKGFTSAGPHMDDLVLALGGKGARLYGSQGQQRALVLALKIAEIENLRAALGRPPLLLLDDVSSELDPAKNRFLLGYLAALPAQAFLTSTDRRLIEPAAGPDTAFFEVRSGVVSPLVS.

An ATP-binding site is contributed by 30–37 (GENGQGKT).

Belongs to the RecF family.

It is found in the cytoplasm. Functionally, the RecF protein is involved in DNA metabolism; it is required for DNA replication and normal SOS inducibility. RecF binds preferentially to single-stranded, linear DNA. It also seems to bind ATP. The chain is DNA replication and repair protein RecF from Anaeromyxobacter sp. (strain K).